We begin with the raw amino-acid sequence, 344 residues long: GTP 3',8-cyclase (344 aa).

The Radical SAM core domain maps to 19-245 (PFGRAVTYLR…DIPYRTGGPA (227 aa)). Arg28 provides a ligand contact to GTP. Cys35 and Cys39 together coordinate [4Fe-4S] cluster. Position 41 (Tyr41) interacts with S-adenosyl-L-methionine. Cys42 contacts [4Fe-4S] cluster. GTP is bound at residue Arg77. Gly81 serves as a coordination point for S-adenosyl-L-methionine. Thr111 contributes to the GTP binding site. Ser135 is a binding site for S-adenosyl-L-methionine. Lys171 is a binding site for GTP. Met205 contacts S-adenosyl-L-methionine. Cys268 and Cys271 together coordinate [4Fe-4S] cluster. 273–275 (RVR) provides a ligand contact to GTP. Residue Cys285 participates in [4Fe-4S] cluster binding.

The protein belongs to the radical SAM superfamily. MoaA family. As to quaternary structure, monomer and homodimer. The cofactor is [4Fe-4S] cluster.

The enzyme catalyses GTP + AH2 + S-adenosyl-L-methionine = (8S)-3',8-cyclo-7,8-dihydroguanosine 5'-triphosphate + 5'-deoxyadenosine + L-methionine + A + H(+). Its pathway is cofactor biosynthesis; molybdopterin biosynthesis. Functionally, catalyzes the cyclization of GTP to (8S)-3',8-cyclo-7,8-dihydroguanosine 5'-triphosphate. The chain is GTP 3',8-cyclase from Brucella canis (strain ATCC 23365 / NCTC 10854 / RM-666).